The primary structure comprises 91 residues: Non-specific lipid-transfer protein 1 (91 aa).

4 cysteine pairs are disulfide-bonded: Cys3-Cys50, Cys13-Cys27, Cys28-Cys73, and Cys48-Cys87. Residues Arg44 and Tyr79 each contribute to the a 1,2-diacyl-sn-glycero-3-phosphocholine site.

Monomer.

Functionally, plant non-specific lipid-transfer proteins transfer phospholipids as well as galactolipids across membranes. May play a role in wax or cutin deposition in the cell walls of expanding epidermal cells and certain secretory tissues. Has antifungal activity against F.solani, F.oxysporum, P.aphanidermatum and S.rolfsii. Has antibacterial activity against the Gram-positive bacterium S.aureus but not against the Gram-negative bacterium S.typhimurium. In Vigna radiata var. radiata (Mung bean), this protein is Non-specific lipid-transfer protein 1.